A 436-amino-acid polypeptide reads, in one-letter code: Adenosylmethionine-8-amino-7-oxononanoate aminotransferase (436 aa).

A substrate-binding site is contributed by W56. 114–115 (GS) lines the pyridoxal 5'-phosphate pocket. Y148 provides a ligand contact to substrate. D245 serves as a coordination point for pyridoxal 5'-phosphate. Substrate is bound by residues K274, S309, and R400. Position 274 is an N6-(pyridoxal phosphate)lysine (K274).

This sequence belongs to the class-III pyridoxal-phosphate-dependent aminotransferase family. BioA subfamily. Homodimer. The cofactor is pyridoxal 5'-phosphate.

It is found in the cytoplasm. It catalyses the reaction (8S)-8-amino-7-oxononanoate + S-adenosyl-L-methionine = S-adenosyl-4-methylsulfanyl-2-oxobutanoate + (7R,8S)-7,8-diammoniononanoate. Its pathway is cofactor biosynthesis; biotin biosynthesis; 7,8-diaminononanoate from 8-amino-7-oxononanoate (SAM route): step 1/1. Functionally, catalyzes the transfer of the alpha-amino group from S-adenosyl-L-methionine (SAM) to 7-keto-8-aminopelargonic acid (KAPA) to form 7,8-diaminopelargonic acid (DAPA). It is the only aminotransferase known to utilize SAM as an amino donor. This chain is Adenosylmethionine-8-amino-7-oxononanoate aminotransferase, found in Helicobacter pylori (strain ATCC 700392 / 26695) (Campylobacter pylori).